We begin with the raw amino-acid sequence, 1861 residues long: Polyketide synthase 2 (1861 aa).

A Ketosynthase family 3 (KS3) domain is found at 109–525 (DSKIAIIGMS…GGNSALLLED (417 aa)). Active-site for beta-ketoacyl synthase activity residues include Cys-264, His-399, and His-441. Residues 626-931 (GFVFSGQGAQ…PSLHRKDDGW (306 aa)) form a malonyl-CoA:ACP transacylase (MAT) domain region. The For acyl/malonyl transferase activity role is filled by Ser-716. Residues 1008-1312 (TSSVQKVIQQ…VFGGMTVLPP (305 aa)) form a product template (PT) domain region. The segment at 1012-1146 (QKVIQQTDGP…CILRFADPKS (135 aa)) is N-terminal hotdog fold. Residues 1012–1318 (QKVIQQTDGP…VLPPRRGADA (307 aa)) enclose the PKS/mFAS DH domain. Residue His-1045 is the Proton acceptor; for dehydratase activity of the active site. Residues 1174–1318 (DSLLSKGIVY…VLPPRRGADA (145 aa)) form a C-terminal hotdog fold region. Asp-1232 functions as the Proton donor; for dehydratase activity in the catalytic mechanism. In terms of domain architecture, Carrier 1 spans 1356–1433 (SPQSGAIHRI…ELRLFLAADQ (78 aa)). Ser-1393 is modified (O-(pantetheine 4'-phosphoryl)serine). The interval 1441–1470 (CESSNGQHTPQTSDKGSGTLTAQKPDHDTD) is disordered. Residues 1442 to 1462 (ESSNGQHTPQTSDKGSGTLTA) show a composition bias toward polar residues. The 75-residue stretch at 1472 to 1546 (EMTLNRVCAI…SLQKTLRGTE (75 aa)) folds into the Carrier 2 domain. At Ser-1506 the chain carries O-(pantetheine 4'-phosphoryl)serine. The thioesterase (TE) domain stretch occupies residues 1582–1855 (ASAPHATSIL…IIEMSNLIGD (274 aa)). The For thioesterase activity role is filled by Ser-1685.

Functionally, polyketide synthase; part of the Pks2 gene cluster that mediates the formation of infectious structures (appressoria), enabling these fungi to kill insects faster. The product of the Pks2 gene cluster is different from the one of Pks1 and has still not been identified. This chain is Polyketide synthase 2, found in Metarhizium acridum (strain CQMa 102).